The following is a 329-amino-acid chain: Anthranilate phosphoribosyltransferase (329 aa).

5-phospho-alpha-D-ribose 1-diphosphate is bound by residues Gly78, 81-82 (GD), 88-91 (NLST), 106-114 (KHGNRAASS), and Ser118. An anthranilate-binding site is contributed by Gly78. Ser90 contributes to the Mg(2+) binding site. Asn109 provides a ligand contact to anthranilate. An anthranilate-binding site is contributed by Arg164. Residues Asp221 and Glu222 each contribute to the Mg(2+) site.

Belongs to the anthranilate phosphoribosyltransferase family. As to quaternary structure, homodimer. Mg(2+) is required as a cofactor.

It catalyses the reaction N-(5-phospho-beta-D-ribosyl)anthranilate + diphosphate = 5-phospho-alpha-D-ribose 1-diphosphate + anthranilate. It functions in the pathway amino-acid biosynthesis; L-tryptophan biosynthesis; L-tryptophan from chorismate: step 2/5. Catalyzes the transfer of the phosphoribosyl group of 5-phosphorylribose-1-pyrophosphate (PRPP) to anthranilate to yield N-(5'-phosphoribosyl)-anthranilate (PRA). The chain is Anthranilate phosphoribosyltransferase from Thermus thermophilus (strain ATCC BAA-163 / DSM 7039 / HB27).